The primary structure comprises 242 residues: Probable transcriptional regulatory protein mhp472 (242 aa).

This sequence belongs to the TACO1 family.

The protein localises to the cytoplasm. This Mesomycoplasma hyopneumoniae (strain 232) (Mycoplasma hyopneumoniae) protein is Probable transcriptional regulatory protein mhp472.